A 581-amino-acid chain; its full sequence is Protein GAMETOPHYTE DEFECTIVE 1 (581 aa).

Residues 452-467 show a composition bias toward polar residues; it reads SMNIESTSEGGSMSPS. Residues 452 to 512 form a disordered region; sequence SMNIESTSEG…TTGHASNDEM (61 aa). Positions 496 to 512 are enriched in basic and acidic residues; that stretch reads ENSKERATTGHASNDEM.

Belongs to the eukaryotic/archaeal RNase P protein component 3 family. Probable component of nuclear RNase P and RNase MRP ribonucleoproteins. Interacts with POP5. Mostly expressed in inflorescence and roots, to a lower extent in leaves, and, at low levels, in siliques, seedlings and stems.

The protein localises to the nucleus. It is found in the nucleolus. The protein resides in the mitochondrion. Its function is as follows. Probable component of ribonuclease P, a ribonucleoprotein complex that generates mature tRNA molecules by cleaving their 5'-ends. May also be a component of the MRP ribonuclease complex, which cleaves pre-rRNA sequences. Required for female gametophyte development and male competence. This Arabidopsis thaliana (Mouse-ear cress) protein is Protein GAMETOPHYTE DEFECTIVE 1.